The sequence spans 148 residues: Sec-independent protein translocase protein TatB (148 aa).

A helical transmembrane segment spans residues 2 to 22 (FNDIGPLELVTLVVLAVLVFG). 2 stretches are compositionally biased toward basic and acidic residues: residues 100–110 (VTDAVHGRESE) and 128–148 (MTKK…ADAT). A disordered region spans residues 100 to 148 (VTDAVHGRESETSASSSSANGSAGGTVDMTKKREQLEADERPPFDADAT).

Belongs to the TatB family. As to quaternary structure, the Tat system comprises two distinct complexes: a TatABC complex, containing multiple copies of TatA, TatB and TatC subunits, and a separate TatA complex, containing only TatA subunits. Substrates initially bind to the TatABC complex, which probably triggers association of the separate TatA complex to form the active translocon.

The protein resides in the cell membrane. In terms of biological role, part of the twin-arginine translocation (Tat) system that transports large folded proteins containing a characteristic twin-arginine motif in their signal peptide across membranes. Together with TatC, TatB is part of a receptor directly interacting with Tat signal peptides. TatB may form an oligomeric binding site that transiently accommodates folded Tat precursor proteins before their translocation. The chain is Sec-independent protein translocase protein TatB from Streptomyces avermitilis (strain ATCC 31267 / DSM 46492 / JCM 5070 / NBRC 14893 / NCIMB 12804 / NRRL 8165 / MA-4680).